Here is a 286-residue protein sequence, read N- to C-terminus: Elongation factor Ts (286 aa).

Positions 82–85 are involved in Mg(2+) ion dislocation from EF-Tu; it reads TDFV.

This sequence belongs to the EF-Ts family.

Its subcellular location is the cytoplasm. In terms of biological role, associates with the EF-Tu.GDP complex and induces the exchange of GDP to GTP. It remains bound to the aminoacyl-tRNA.EF-Tu.GTP complex up to the GTP hydrolysis stage on the ribosome. In Desulfovibrio desulfuricans (strain ATCC 27774 / DSM 6949 / MB), this protein is Elongation factor Ts.